A 118-amino-acid chain; its full sequence is MLTNYAFIGIFALAAITFPLLPLVLSAFLRPNRPTPVKLSTYECGLEAIGDIWVQFKVQYYLYALAFVIFDIETVFLYPWAVAYGQLGLFALFEMVVFLAILTIGLVYAWKKGALEWI.

3 helical membrane passes run 5–25 (YAFIGIFALAAITFPLLPLVL), 62–82 (LYALAFVIFDIETVFLYPWAV), and 87–107 (LGLFALFEMVVFLAILTIGLV).

The protein belongs to the complex I subunit 3 family. NDH-1 is composed of 14 different subunits. Subunits NuoA, H, J, K, L, M, N constitute the membrane sector of the complex.

The protein localises to the cell membrane. It catalyses the reaction a quinone + NADH + 5 H(+)(in) = a quinol + NAD(+) + 4 H(+)(out). Functionally, NDH-1 shuttles electrons from NADH, via FMN and iron-sulfur (Fe-S) centers, to quinones in the respiratory chain. The immediate electron acceptor for the enzyme in this species is believed to be ubiquinone. Couples the redox reaction to proton translocation (for every two electrons transferred, four hydrogen ions are translocated across the cytoplasmic membrane), and thus conserves the redox energy in a proton gradient. In Herpetosiphon aurantiacus (strain ATCC 23779 / DSM 785 / 114-95), this protein is NADH-quinone oxidoreductase subunit A.